Reading from the N-terminus, the 252-residue chain is Acetoacetate decarboxylase (252 aa).

The active-site Schiff-base intermediate with acetoacetate is the Lys116.

This sequence belongs to the ADC family.

The catalysed reaction is acetoacetate + H(+) = acetone + CO2. Functionally, catalyzes the conversion of acetoacetate to acetone and carbon dioxide. In Paraburkholderia phytofirmans (strain DSM 17436 / LMG 22146 / PsJN) (Burkholderia phytofirmans), this protein is Acetoacetate decarboxylase.